Here is a 156-residue protein sequence, read N- to C-terminus: ATP synthase subunit b (156 aa).

A helical transmembrane segment spans residues 5 to 27 (ITLIGQMITFAIFVGFTMKFVWP).

The protein belongs to the ATPase B chain family. In terms of assembly, F-type ATPases have 2 components, F(1) - the catalytic core - and F(0) - the membrane proton channel. F(1) has five subunits: alpha(3), beta(3), gamma(1), delta(1), epsilon(1). F(0) has three main subunits: a(1), b(2) and c(10-14). The alpha and beta chains form an alternating ring which encloses part of the gamma chain. F(1) is attached to F(0) by a central stalk formed by the gamma and epsilon chains, while a peripheral stalk is formed by the delta and b chains.

The protein resides in the cell inner membrane. In terms of biological role, f(1)F(0) ATP synthase produces ATP from ADP in the presence of a proton or sodium gradient. F-type ATPases consist of two structural domains, F(1) containing the extramembraneous catalytic core and F(0) containing the membrane proton channel, linked together by a central stalk and a peripheral stalk. During catalysis, ATP synthesis in the catalytic domain of F(1) is coupled via a rotary mechanism of the central stalk subunits to proton translocation. Its function is as follows. Component of the F(0) channel, it forms part of the peripheral stalk, linking F(1) to F(0). This Francisella tularensis subsp. tularensis (strain SCHU S4 / Schu 4) protein is ATP synthase subunit b.